The chain runs to 366 residues: 3-dehydroquinate synthase (366 aa).

Residues 71 to 76, 105 to 109, 129 to 130, Lys142, Lys151, and 169 to 172 each bind NAD(+); these read DGEQYK, GVIGD, TT, and CLKT. Zn(2+) contacts are provided by Glu184, His247, and His264.

This sequence belongs to the sugar phosphate cyclases superfamily. Dehydroquinate synthase family. The cofactor is Co(2+). Zn(2+) is required as a cofactor. NAD(+) serves as cofactor.

Its subcellular location is the cytoplasm. It carries out the reaction 7-phospho-2-dehydro-3-deoxy-D-arabino-heptonate = 3-dehydroquinate + phosphate. It functions in the pathway metabolic intermediate biosynthesis; chorismate biosynthesis; chorismate from D-erythrose 4-phosphate and phosphoenolpyruvate: step 2/7. Its function is as follows. Catalyzes the conversion of 3-deoxy-D-arabino-heptulosonate 7-phosphate (DAHP) to dehydroquinate (DHQ). This Serratia proteamaculans (strain 568) protein is 3-dehydroquinate synthase.